The primary structure comprises 646 residues: Tyrosine-protein kinase MasK (646 aa).

Topologically, residues 1–415 are periplasmic; sequence MSPPQTTLPV…PTAGGRRWRT (415 aa). The 276-residue stretch at 25 to 300 folds into the Protein kinase domain; the sequence is YVLVRKLAEG…AFADALETFL (276 aa). ATP-binding positions include 31–39 and K57; that span reads LAEGGMAEI. Catalysis depends on D163, which acts as the Proton acceptor. Positions 373 to 410 are disordered; the sequence is TSAQRPGMSMRPSSPGVPAHGAASRGSTSPESAPTAGG. A helical membrane pass occupies residues 416-433; the sequence is LAVGLAGGLMLAAAGIVG. At 434–646 the chain is on the cytoplasmic side; it reads YRQWMTTPAS…VMPFSWRVTQ (213 aa). Residues 521-547 form a disordered region; it reads AGAASDVEAEADEEGADAAPVRSKKAS. Residues 527 to 536 show a composition bias toward acidic residues; that stretch reads VEAEADEEGA.

This sequence belongs to the protein kinase superfamily. Tyr protein kinase family. In terms of assembly, interacts with MglA. In terms of processing, autophosphorylated.

It is found in the cell inner membrane. The enzyme catalyses L-tyrosyl-[protein] + ATP = O-phospho-L-tyrosyl-[protein] + ADP + H(+). Its function is as follows. Essential for growth. Interacts with MglA to control social gliding motility. The sequence is that of Tyrosine-protein kinase MasK (masK) from Myxococcus xanthus (strain DK1622).